A 445-amino-acid polypeptide reads, in one-letter code: Probable D-serine dehydratase (445 aa).

Lysine 111 is modified (N6-(pyridoxal phosphate)lysine).

Belongs to the serine/threonine dehydratase family. DsdA subfamily. Requires pyridoxal 5'-phosphate as cofactor.

The catalysed reaction is D-serine = pyruvate + NH4(+). The sequence is that of Probable D-serine dehydratase from Burkholderia pseudomallei (strain 668).